The sequence spans 75 residues: RNA-binding protein KhpA (75 aa).

The region spanning lysine 29 to methionine 75 is the KH domain.

It belongs to the KhpA RNA-binding protein family. Forms a complex with KhpB.

It localises to the cytoplasm. In terms of biological role, a probable RNA chaperone. Forms a complex with KhpB which binds to cellular RNA and controls its expression. Plays a role in peptidoglycan (PG) homeostasis and cell length regulation. The chain is RNA-binding protein KhpA from Oceanobacillus iheyensis (strain DSM 14371 / CIP 107618 / JCM 11309 / KCTC 3954 / HTE831).